We begin with the raw amino-acid sequence, 155 residues long: MRLYALSVSLLAAITLLACVIASADSNMVSQMKRRLSQDVSETEITELSESKKPTAQDIDNEERAQLTLLSDSQAIVAVAEKAAHSSPKVLGGTSALATTKFALQSQKTSRLRQLLDKVMKISGLLKKFLNFFKNKKTNTVPKLENKPHNAFDTV.

A signal peptide spans Met1–Ala24. Positions Arg34–Arg64 match the RxLR-dEER motif.

The protein belongs to the RxLR effector family.

Its subcellular location is the secreted. It is found in the host cell membrane. Functionally, secreted effector that does not suppress pattern-triggered immunity (PTI) in plant host. The chain is Secreted RxLR effector protein RXLR-C301 from Plasmopara halstedii (Downy mildew of sunflower).